A 402-amino-acid polypeptide reads, in one-letter code: Choline dehydrogenase (402 aa).

This sequence belongs to the iron-containing alcohol dehydrogenase family.

The enzyme catalyses choline + NAD(+) = betaine aldehyde + NADH + H(+). The protein operates within amine and polyamine biosynthesis; betaine biosynthesis via choline pathway; betaine aldehyde from choline (dehydrogenase route): step 1/1. Functionally, involved in the biosynthesis of the osmoprotectant glycine betaine from choline. This is Choline dehydrogenase from Bacillus subtilis (strain 168).